Consider the following 78-residue polypeptide: MKEFLAYIVKNLVDKPEEVHLKEVQGTNTIIYELTVAKGDIGKIIGKEGRTIKAIRTLLVSVASRDNVKVSLEIMEER.

The 50-residue stretch at 29–78 (TIIYELTVAKGDIGKIIGKEGRTIKAIRTLLVSVASRDNVKVSLEIMEER) folds into the KH domain.

Belongs to the KhpA RNA-binding protein family.

Its subcellular location is the cytoplasm. Its function is as follows. A probable RNA-binding protein. This chain is RNA-binding protein KhpA, found in Chlamydia trachomatis serovar D (strain ATCC VR-885 / DSM 19411 / UW-3/Cx).